Reading from the N-terminus, the 378-residue chain is Neutral protease 2 homolog ARB_04336 (378 aa).

The signal sequence occupies residues 1 to 19; it reads MKFFTALAAVGALLAPAVA. A propeptide spanning residues 20–186 is cleaved from the precursor; the sequence is LPTPASEASH…DYFSKGLDKR (167 aa). 2 disulfides stabilise this stretch: Cys192-Cys262 and Cys269-Cys287. His311 lines the Zn(2+) pocket. The active site involves Glu312. 2 residues coordinate Zn(2+): His315 and Asp326.

The protein belongs to the peptidase M35 family. Requires Zn(2+) as cofactor.

The protein localises to the secreted. It carries out the reaction Preferential cleavage of bonds with hydrophobic residues in P1'. Also 3-Asn-|-Gln-4 and 8-Gly-|-Ser-9 bonds in insulin B chain.. In terms of biological role, secreted metalloproteinase that allows assimilation of proteinaceous substrates. Shows high activities on basic nuclear substrates such as histone and protamine. May be involved in virulence. The chain is Neutral protease 2 homolog ARB_04336 from Arthroderma benhamiae (strain ATCC MYA-4681 / CBS 112371) (Trichophyton mentagrophytes).